Here is a 218-residue protein sequence, read N- to C-terminus: Outer-membrane lipoprotein LolB (218 aa).

The signal sequence occupies residues 1–20 (MSQVIRTLALTGLALAGLSG). A lipid anchor (N-palmitoyl cysteine) is attached at C21. The S-diacylglycerol cysteine moiety is linked to residue C21.

This sequence belongs to the LolB family. Monomer.

It is found in the cell outer membrane. Functionally, plays a critical role in the incorporation of lipoproteins in the outer membrane after they are released by the LolA protein. This chain is Outer-membrane lipoprotein LolB, found in Xanthomonas campestris pv. campestris (strain 8004).